Consider the following 1048-residue polypeptide: 3-hydroxy-3-methylglutaryl-coenzyme A reductase (1048 aa).

The Cytoplasmic portion of the chain corresponds to 1 to 32 (MDPVVKKPSPGGVQHRVTKGLRAIVGHACRHP). The helical transmembrane segment at 33 to 53 (IHTLLVTALTAATTHLHVLEG) threads the bilayer. Topologically, residues 54 to 220 (TYQAAHRGLA…FLHRVKHAET (167 aa)) are lumenal. A helical transmembrane segment spans residues 221 to 241 (VDLVIIGLSYLAMNMTVVSLF). An SSD domain is found at 222 to 403 (DLVIIGLSYL…FTFYATILCV (182 aa)). The Cytoplasmic segment spans residues 242-250 (RVMRQLGSR). A helical transmembrane segment spans residues 251–271 (FWLATSVLLSGAFAFVLGLGI). At 272–276 (TTTCD) the chain is on the lumenal side. Residues 277–297 (VPVDMLLLFEGIPYLVLTVGF) form a helical membrane-spanning segment. The Cytoplasmic segment spans residues 298 to 348 (EKPIQLTRAVLCVSEELRGGWQRPVPNGASSDDSRQSQLIPNIIQLAVDRE). The chain crosses the membrane as a helical span at residues 349-369 (GWYIVRSYLLEIGALALGAVL). Residues 370–377 (RPNDSLGH) lie on the Lumenal side of the membrane. Asparagine 372 is a glycosylation site (N-linked (GlcNAc...) asparagine). Residues 378-398 (FCFLAAWTLLIDAILLFTFYA) traverse the membrane as a helical segment. Topologically, residues 399-439 (TILCVKLEITRIRSPGGLGQVNAKHPSGIFGHKVKSTNITW) are cytoplasmic. A helical membrane pass occupies residues 440 to 460 (WKLLTVGGFVLCHFLQLSPFF). Residues 461 to 542 (YRVMGEYMAN…LDGLESPLGR (82 aa)) are Lumenal-facing. Asparagine 470 and asparagine 520 each carry an N-linked (GlcNAc...) asparagine glycan. Residues 543 to 563 (LCLMGALVVSLVLNNHLIHAA) form a helical membrane-spanning segment. Topologically, residues 564 to 1048 (RWHAWPQARE…NRSAGATVKK (485 aa)) are cytoplasmic. Glutamate 729 functions as the Charge relay system in the catalytic mechanism. 735–741 (SASRGCK) is a binding site for CoA. NADP(+)-binding positions include 796–798 (SRF) and 823–831 (DAMGMNMIS). Lysine 863 (charge relay system) is an active-site residue. 892–894 (VLK) is a CoA binding site. Residue aspartate 939 is the Charge relay system of the active site. 1034 to 1035 (AH) serves as a coordination point for CoA. Catalysis depends on histidine 1035, which acts as the Proton donor. Residue 1039–1040 (NR) participates in NADP(+) binding.

Belongs to the HMG-CoA reductase family.

It is found in the endoplasmic reticulum membrane. The enzyme catalyses (R)-mevalonate + 2 NADP(+) + CoA = (3S)-3-hydroxy-3-methylglutaryl-CoA + 2 NADPH + 2 H(+). The protein operates within metabolic intermediate biosynthesis; (R)-mevalonate biosynthesis; (R)-mevalonate from acetyl-CoA: step 3/3. Functionally, HMG-CoA reductase; part of the first module of ergosterol biosynthesis pathway that includes the early steps of the pathway, conserved across all eukaryotes, and which results in the formation of mevalonate from acetyl-coenzyme A (acetyl-CoA). In this module, the cytosolic acetyl-CoA acetyltransferase catalyzes the formation of acetoacetyl-CoA. The hydroxymethylglutaryl-CoA synthase then condenses acetyl-CoA with acetoacetyl-CoA to form HMG-CoA. The rate-limiting step of the early module is the reduction to mevalonate by the 3-hydroxy-3-methylglutaryl-coenzyme A (HMG-CoA) reductase. The chain is 3-hydroxy-3-methylglutaryl-coenzyme A reductase from Aspergillus terreus (strain NIH 2624 / FGSC A1156).